Consider the following 156-residue polypeptide: Snaclec A12 (156 aa).

The signal sequence occupies residues 1–23 (MGRSISVSFGLLVVFLSLSGTGA). Intrachain disulfides connect cysteine 27/cysteine 38, cysteine 55/cysteine 148, and cysteine 123/cysteine 140. The C-type lectin domain occupies 34–149 (YEGHCYKVFN…CELAYHFICM (116 aa)).

Belongs to the snaclec family. As to quaternary structure, heterodimer; disulfide-linked. Expressed by the venom gland.

The protein resides in the secreted. Its function is as follows. Interferes with one step of hemostasis (modulation of platelet aggregation, or coagulation cascade, for example). This chain is Snaclec A12, found in Macrovipera lebetinus (Levantine viper).